A 285-amino-acid polypeptide reads, in one-letter code: 4-diphosphocytidyl-2-C-methyl-D-erythritol kinase (285 aa).

Lys-12 is an active-site residue. Residue 95–105 (PVGAGLAGGST) participates in ATP binding. The active site involves Asp-137.

The protein belongs to the GHMP kinase family. IspE subfamily.

The catalysed reaction is 4-CDP-2-C-methyl-D-erythritol + ATP = 4-CDP-2-C-methyl-D-erythritol 2-phosphate + ADP + H(+). It participates in isoprenoid biosynthesis; isopentenyl diphosphate biosynthesis via DXP pathway; isopentenyl diphosphate from 1-deoxy-D-xylulose 5-phosphate: step 3/6. Functionally, catalyzes the phosphorylation of the position 2 hydroxy group of 4-diphosphocytidyl-2C-methyl-D-erythritol. This is 4-diphosphocytidyl-2-C-methyl-D-erythritol kinase from Syntrophomonas wolfei subsp. wolfei (strain DSM 2245B / Goettingen).